The sequence spans 600 residues: Terpenoid synthase 8 (600 aa).

Residues aspartate 352, aspartate 356, asparagine 497, and aspartate 505 each coordinate Mg(2+). Positions 352 to 356 match the DDXXD motif motif; sequence DDTCD.

This sequence belongs to the terpene synthase family. Tpsa subfamily. Mg(2+) serves as cofactor. The cofactor is Mn(2+). Stele, and tips of primary and secondary root.

Its subcellular location is the plastid. It catalyses the reaction (2E,6E,10E)-geranylgeranyl diphosphate = rhizathalene A + diphosphate. It functions in the pathway secondary metabolite biosynthesis; terpenoid biosynthesis. Functionally, catalyzes the synthesis of the semivolatile diterpene rhizatalene A. This Arabidopsis thaliana (Mouse-ear cress) protein is Terpenoid synthase 8 (TPS08).